Reading from the N-terminus, the 213-residue chain is Large ribosomal subunit protein uL3 (213 aa).

Residues 135 to 155 are disordered; it reads THGSKNHRLPGSTGAGTTPGR.

It belongs to the universal ribosomal protein uL3 family. As to quaternary structure, part of the 50S ribosomal subunit. Forms a cluster with proteins L14 and L19.

Functionally, one of the primary rRNA binding proteins, it binds directly near the 3'-end of the 23S rRNA, where it nucleates assembly of the 50S subunit. This Synechocystis sp. (strain ATCC 27184 / PCC 6803 / Kazusa) protein is Large ribosomal subunit protein uL3.